Consider the following 881-residue polypeptide: Disks large homolog 2 (881 aa).

Disordered regions lie at residues 16–41 (HRQQ…MNPA) and 63–88 (LSTT…SFPR). PDZ domains are found at residues 155 to 242 (EITL…RRRR), 250 to 337 (EIKL…GKPT), and 424 to 505 (KIVL…QYRP). Residues 539–609 (KRSLYVRALF…PSKRRVERKE (71 aa)) form the SH3 domain. The 184-residue stretch at 683–866 (ARPVIILGPM…IYNQCKMVIE (184 aa)) folds into the Guanylate kinase-like domain. A disordered region spans residues 709-729 (GSCVPPANSSDQEDTTRPKRD).

Belongs to the MAGUK family.

The protein resides in the cell membrane. The protein localises to the postsynaptic density. It localises to the synapse. It is found in the membrane. Its subcellular location is the cell projection. The protein resides in the axon. The protein localises to the perikaryon. Functionally, may play a role in synapse assembly and function. The chain is Disks large homolog 2 (dlg2) from Danio rerio (Zebrafish).